The chain runs to 135 residues: Small ribosomal subunit protein uS12 (135 aa).

The tract at residues 1-24 is disordered; that stretch reads MPTINQLVRKGRHSKTTKSKSPAL. Positions 9–18 are enriched in basic residues; the sequence is RKGRHSKTTK. Asp-102 carries the post-translational modification 3-methylthioaspartic acid.

The protein belongs to the universal ribosomal protein uS12 family. In terms of assembly, part of the 30S ribosomal subunit. Contacts proteins S8 and S17. May interact with IF1 in the 30S initiation complex.

With S4 and S5 plays an important role in translational accuracy. In terms of biological role, interacts with and stabilizes bases of the 16S rRNA that are involved in tRNA selection in the A site and with the mRNA backbone. Located at the interface of the 30S and 50S subunits, it traverses the body of the 30S subunit contacting proteins on the other side and probably holding the rRNA structure together. The combined cluster of proteins S8, S12 and S17 appears to hold together the shoulder and platform of the 30S subunit. In Lactobacillus delbrueckii subsp. bulgaricus (strain ATCC 11842 / DSM 20081 / BCRC 10696 / JCM 1002 / NBRC 13953 / NCIMB 11778 / NCTC 12712 / WDCM 00102 / Lb 14), this protein is Small ribosomal subunit protein uS12.